The chain runs to 1442 residues: Clustered mitochondria protein homolog (1442 aa).

Disordered stretches follow at residues 38–100 and 237–258; these read NYRN…KKPD and GRSE…KDRP. Positions 82–100 are enriched in basic and acidic residues; the sequence is SEGEQQKDKTAAEDKKKPD. One can recognise a Clu domain in the interval 394–636; the sequence is RAEDTFSSKL…RTFPPDVNFL (243 aa). 2 stretches are compositionally biased toward basic and acidic residues: residues 696-714 and 737-763; these read QKQE…EPKA and ESKE…KVET. Disordered regions lie at residues 696–763 and 949–984; these read QKQE…KVET and SESD…SFQC. A compositionally biased stretch (polar residues) spans 949 to 958; the sequence is SESDALTKSG. TPR repeat units lie at residues 1087–1120, 1213–1246, and 1248–1281; these read AYNF…LNNV, ALLD…NIKY, and GEKS…EKET. The segment at 1373 to 1442 is disordered; it reads RQKEGGTSEQ…SSNASAQQVS (70 aa). Residues 1380–1390 are compositionally biased toward low complexity; the sequence is SEQAAAAQASQ. Polar residues predominate over residues 1424–1442; it reads ASSSKQADNSSNASAQQVS.

Belongs to the CLU family.

The protein resides in the cytoplasm. Its function is as follows. mRNA-binding protein involved in proper cytoplasmic distribution of mitochondria. This Aedes aegypti (Yellowfever mosquito) protein is Clustered mitochondria protein homolog.